Consider the following 217-residue polypeptide: Small ribosomal subunit protein uS3 (217 aa).

Positions 38–106 (IRKFVQKELA…QVHINIIEIK (69 aa)) constitute a KH type-2 domain.

It belongs to the universal ribosomal protein uS3 family. Part of the 30S ribosomal subunit. Forms a tight complex with proteins S10 and S14.

In terms of biological role, binds the lower part of the 30S subunit head. Binds mRNA in the 70S ribosome, positioning it for translation. The protein is Small ribosomal subunit protein uS3 of Streptococcus gordonii (strain Challis / ATCC 35105 / BCRC 15272 / CH1 / DL1 / V288).